Consider the following 64-residue polypeptide: DNA gyrase inhibitor YacG (64 aa).

Residues C9, C12, C28, and C32 each coordinate Zn(2+). The disordered stretch occupies residues 42–64 (DEENAIPGAPDMSDSDGWSEEQY). The span at 54 to 64 (SDSDGWSEEQY) shows a compositional bias: acidic residues.

The protein belongs to the DNA gyrase inhibitor YacG family. As to quaternary structure, interacts with GyrB. Zn(2+) serves as cofactor.

Its function is as follows. Inhibits all the catalytic activities of DNA gyrase by preventing its interaction with DNA. Acts by binding directly to the C-terminal domain of GyrB, which probably disrupts DNA binding by the gyrase. In Vibrio vulnificus (strain YJ016), this protein is DNA gyrase inhibitor YacG.